Reading from the N-terminus, the 355-residue chain is NADH-quinone oxidoreductase subunit H (355 aa).

8 consecutive transmembrane segments (helical) span residues 25–45 (IVRI…LILW), 91–111 (WLYL…WAVI), 126–146 (LLYA…AGWA), 170–190 (MGFA…SEIV), 205–225 (FLSW…VSGI), 253–273 (MAFA…SALA), 290–310 (FIPG…VFIW), and 330–350 (VFLP…MSPL).

This sequence belongs to the complex I subunit 1 family. NDH-1 is composed of 14 different subunits. Subunits NuoA, H, J, K, L, M, N constitute the membrane sector of the complex.

Its subcellular location is the cell inner membrane. The catalysed reaction is a quinone + NADH + 5 H(+)(in) = a quinol + NAD(+) + 4 H(+)(out). Its function is as follows. NDH-1 shuttles electrons from NADH, via FMN and iron-sulfur (Fe-S) centers, to quinones in the respiratory chain. The immediate electron acceptor for the enzyme in this species is believed to be ubiquinone. Couples the redox reaction to proton translocation (for every two electrons transferred, four hydrogen ions are translocated across the cytoplasmic membrane), and thus conserves the redox energy in a proton gradient. This subunit may bind ubiquinone. In Burkholderia ambifaria (strain MC40-6), this protein is NADH-quinone oxidoreductase subunit H.